The sequence spans 70 residues: Bowman-Birk type proteinase inhibitor A7 (70 aa).

4 cysteine pairs are disulfide-bonded: C12–C31, C18–C29, C38–C45, and C42–C59.

It belongs to the Bowman-Birk serine protease inhibitor family. In terms of tissue distribution, expressed in bulb (at protein level).

Serine protease inhibitor. Strongly inhibits trypsin (Ki = 7.1 nM) and almost completely inhibits elastase. Also inhibits chymotrypsin (Ki = 19 nM). Does not inhibit bacterial subtilisin. The protein is Bowman-Birk type proteinase inhibitor A7 of Hyacinthus orientalis (Common hyacinth).